We begin with the raw amino-acid sequence, 371 residues long: Leu/Ile/Val-binding protein homolog 1 (371 aa).

The N-terminal stretch at 1 to 23 is a signal peptide; that stretch reads MRKTLFSGVALAAVIAFGGSAWA.

This sequence belongs to the leucine-binding protein family.

Its function is as follows. Component of an amino-acid transport system. This is Leu/Ile/Val-binding protein homolog 1 from Brucella suis biovar 1 (strain 1330).